The sequence spans 166 residues: Cyanate hydratase (166 aa).

Residues Arg-92, Glu-95, and Ser-118 contribute to the active site.

The protein belongs to the cyanase family.

It catalyses the reaction cyanate + hydrogencarbonate + 3 H(+) = NH4(+) + 2 CO2. Functionally, catalyzes the reaction of cyanate with bicarbonate to produce ammonia and carbon dioxide. This Sorghum bicolor (Sorghum) protein is Cyanate hydratase.